The chain runs to 407 residues: Imidazolonepropionase (407 aa).

Histidine 68 and histidine 70 together coordinate Fe(3+). Positions 68 and 70 each coordinate Zn(2+). Arginine 77, tyrosine 140, and histidine 173 together coordinate 4-imidazolone-5-propanoate. Tyrosine 140 provides a ligand contact to N-formimidoyl-L-glutamate. Histidine 238 contributes to the Fe(3+) binding site. Histidine 238 is a binding site for Zn(2+). Residue glutamine 241 participates in 4-imidazolone-5-propanoate binding. Aspartate 313 serves as a coordination point for Fe(3+). Aspartate 313 serves as a coordination point for Zn(2+). Residues asparagine 315 and glycine 317 each contribute to the N-formimidoyl-L-glutamate site. Threonine 318 serves as a coordination point for 4-imidazolone-5-propanoate.

It belongs to the metallo-dependent hydrolases superfamily. HutI family. It depends on Zn(2+) as a cofactor. Fe(3+) serves as cofactor.

The protein resides in the cytoplasm. The enzyme catalyses 4-imidazolone-5-propanoate + H2O = N-formimidoyl-L-glutamate. It participates in amino-acid degradation; L-histidine degradation into L-glutamate; N-formimidoyl-L-glutamate from L-histidine: step 3/3. Catalyzes the hydrolytic cleavage of the carbon-nitrogen bond in imidazolone-5-propanoate to yield N-formimidoyl-L-glutamate. It is the third step in the universal histidine degradation pathway. This is Imidazolonepropionase from Burkholderia cenocepacia (strain HI2424).